The sequence spans 638 residues: Growth hormone receptor (638 aa).

Residues 1-18 (MDLWQLLLTLALAGSSDA) form the signal peptide. Over 19–264 (FSGSEPTAAI…NQFTCEEDFY (246 aa)) the chain is Extracellular. Residue asparagine 46 is glycosylated (N-linked (GlcNAc...) asparagine). Cystine bridges form between cysteine 56-cysteine 66 and cysteine 101-cysteine 112. N-linked (GlcNAc...) asparagine glycosylation is present at asparagine 115. Cysteine 126 and cysteine 140 form a disulfide bridge. Positions 151-254 (PPIALNWTLL…EVLYVTLPQM (104 aa)) constitute a Fibronectin type-III domain. Asparagine 156, asparagine 161, and asparagine 200 each carry an N-linked (GlcNAc...) asparagine glycan. The short motif at 240 to 244 (YGEFS) is the WSXWS motif element. The chain crosses the membrane as a helical span at residues 265 to 288 (FPWLLIIIFGIFGLTVMLFVFLFS). At 289–638 (KQQRIKMLIL…STDQLNKIMP (350 aa)) the chain is on the cytoplasmic side. The required for JAK2 binding stretch occupies residues 294 to 379 (KMLILPPVPV…HQKSHSNLGV (86 aa)). The Box 1 motif signature appears at 297-305 (ILPPVPVPK). The UbE motif motif lies at 340–349 (DSWVEFIELD). Serine 341 carries the post-translational modification Phosphoserine. The segment at 353–388 (PDEKNEGSDTDRLLSSDHQKSHSNLGVKDGDSGRTS) is disordered. Positions 356–372 (KNEGSDTDRLLSSDHQK) are enriched in basic and acidic residues. Phosphotyrosine occurs at positions 487 and 595.

This sequence belongs to the type I cytokine receptor family. Type 1 subfamily. On growth hormone (GH) binding, forms homodimers and binds JAK2 via a box 1-containing domain. The soluble form (GHBP) is produced by phorbol ester-promoted proteolytic cleavage at the cell surface (shedding) by ADAM17/TACE. Shedding is inhibited by growth hormone (GH) binding to the receptor probably due to a conformational change in GHR rendering the receptor inaccessible to ADAM17. In terms of processing, on GH binding, phosphorylated on tyrosine residues in the cytoplasmic domain by JAK2. Post-translationally, ubiquitinated by the ECS(SOCS2) complex following ligand-binding and phosphorylation by JAK2, leading to its degradation by the proteasome. Regulation by the ECS(SOCS2) complex acts as a negative feedback loop of growth hormone receptor signaling. Ubiquitination is not sufficient for GHR internalization.

It localises to the cell membrane. The protein resides in the secreted. Functionally, receptor for pituitary gland growth hormone (GH1) involved in regulating postnatal body growth. On ligand binding, couples to the JAK2/STAT5 pathway. The soluble form (GHBP) acts as a reservoir of growth hormone in plasma and may be a modulator/inhibitor of GH signaling. The chain is Growth hormone receptor (GHR) from Macaca mulatta (Rhesus macaque).